Reading from the N-terminus, the 266-residue chain is Tryptophan synthase alpha chain (266 aa).

Catalysis depends on proton acceptor residues Glu51 and Asp62.

The protein belongs to the TrpA family. Tetramer of two alpha and two beta chains.

It carries out the reaction (1S,2R)-1-C-(indol-3-yl)glycerol 3-phosphate + L-serine = D-glyceraldehyde 3-phosphate + L-tryptophan + H2O. Its pathway is amino-acid biosynthesis; L-tryptophan biosynthesis; L-tryptophan from chorismate: step 5/5. In terms of biological role, the alpha subunit is responsible for the aldol cleavage of indoleglycerol phosphate to indole and glyceraldehyde 3-phosphate. The polypeptide is Tryptophan synthase alpha chain (Prochlorococcus marinus (strain NATL1A)).